The chain runs to 86 residues: Small ribosomal subunit protein bS20 (86 aa).

The disordered stretch occupies residues 1–22; that stretch reads MANIKSQIKRIRTNERRRLRNQ. Basic residues predominate over residues 7 to 20; sequence QIKRIRTNERRRLR.

Belongs to the bacterial ribosomal protein bS20 family.

Its function is as follows. Binds directly to 16S ribosomal RNA. The sequence is that of Small ribosomal subunit protein bS20 from Mycolicibacterium smegmatis (strain ATCC 700084 / mc(2)155) (Mycobacterium smegmatis).